The following is a 146-amino-acid chain: Large ribosomal subunit protein uL15 (146 aa).

Positions 1–64 are disordered; that stretch reads MELNSIKPAA…MPMHRRLPKR (64 aa). The span at 30–39 shows a compositional bias: basic residues; it reads TATKGHKGQK.

It belongs to the universal ribosomal protein uL15 family. Part of the 50S ribosomal subunit.

Its function is as follows. Binds to the 23S rRNA. In Geotalea daltonii (strain DSM 22248 / JCM 15807 / FRC-32) (Geobacter daltonii), this protein is Large ribosomal subunit protein uL15.